A 712-amino-acid polypeptide reads, in one-letter code: MTPHVMKRDGCKVPFKSERIKEAILRAAKAAEVDDADYCATVAAVVSEQMQGRNQVDINEIQTAVENQLMSGPYKQLARAYIEYRHDRDIEREKRGRLNQEIRGLVEQTNASLLNENANKDSKVIPTQRDLLAGIVAKHYARQHLLPRDVVQAHERGDIHYHDLDYSPFFPMFNCMLIDLKGMLTQGFKMGNAEIEPPKSISTATAVTAQIIAQVASHIYGGTTINRIDEVLAPFVTASYNKHRKTAEEWNIPDAEGYANSRTIKECYDAFQSLEYEVNTLHTANGQTPFVTFGFGLGTSWESRLIQESILRNRIAGLGKNRKTAVFPKLVFAIRDGLNHKKGDPNYDIKQLALECASKRMYPDILNYDQVVKVTGSFKTPMGCRSFLGVWENENGEQIHDGRNNLGVISLNLPRIALEAKGDEATFWKLLDERLVLARKALMTRIARLEGVKARVAPILYMEGACGVRLNADDDVSEIFKNGRASISLGYIGIHETINALFGGEHVYDNEQLRAKGIAIVERLRQAVDQWKEETGYGFSLYSTPSENLCDRFCRLDTAEFGVVPGVTDKGYYTNSFHLDVEKKVNPYDKIDFEAPYPPLANGGFICYGEYPNIQHNLKALEDVWDYSYQHVPYYGTNTPIDECYECGFTGEFECTSKGFTCPKCGNHDASRVSVTRRVCGYLGSPDARPFNAGKQEEVKRRVKHLGNGQIG.

The 90-residue stretch at 3-92 folds into the ATP-cone domain; the sequence is PHVMKRDGCK…EYRHDRDIER (90 aa). Residues 583-708 form the Glycine radical domain; the sequence is KKVNPYDKID…VKRRVKHLGN (126 aa). 4 residues coordinate Zn(2+): Cys-644, Cys-647, Cys-662, and Cys-665. Gly-681 carries the post-translational modification Glycine radical.

Belongs to the anaerobic ribonucleoside-triphosphate reductase family. In terms of assembly, homodimer. Forms a tetramer composed of two NrdD and two NrdG subunits.

The catalysed reaction is a ribonucleoside 5'-triphosphate + formate + H(+) = a 2'-deoxyribonucleoside 5'-triphosphate + CO2 + H2O. It carries out the reaction formate + ATP + H(+) = dATP + CO2 + H2O. It catalyses the reaction CTP + formate + H(+) = dCTP + CO2 + H2O. The enzyme catalyses GTP + formate + H(+) = dGTP + CO2 + H2O. The catalysed reaction is UTP + formate + H(+) = dUTP + CO2 + H2O. With respect to regulation, activated under anaerobic conditions by NrdG, a tightly associated activase. Activation involves the formation of a glycyl radical at Gly-681. Exposure of the activated reductase to oxygen leads to C-terminal truncation and inactivation of the protein, by cleavage at the N-terminal side of Gly-681. The presence of zinc protects the protein from proteolysis and prevents the formation of disulfide bridges within it. The enzyme shows a basal activity in the absence of any effector, but reduction is stimulated up to 10-fold by an appropriate modulator (dGTP for ATP reduction, ATP for CTP and UTP reduction, and dTTP for GTP reduction). dGTP and dTTP inhibit the reduction of the incorrect substrate, and dATP inhibits reduction of all four. These modulators act as allosteric effectors. In terms of biological role, catalyzes the conversion of ribonucleotides into deoxyribonucleotides, which are required for DNA synthesis and repair. Can reduce each of the four common ribonucleoside triphosphates. The polypeptide is Anaerobic ribonucleoside-triphosphate reductase (Escherichia coli (strain K12)).